The following is a 196-amino-acid chain: ATP-dependent Clp protease proteolytic subunit (196 aa).

Ser-96 acts as the Nucleophile in catalysis. Residue His-121 is part of the active site.

Belongs to the peptidase S14 family. As to quaternary structure, fourteen ClpP subunits assemble into 2 heptameric rings which stack back to back to give a disk-like structure with a central cavity, resembling the structure of eukaryotic proteasomes.

It localises to the cytoplasm. It catalyses the reaction Hydrolysis of proteins to small peptides in the presence of ATP and magnesium. alpha-casein is the usual test substrate. In the absence of ATP, only oligopeptides shorter than five residues are hydrolyzed (such as succinyl-Leu-Tyr-|-NHMec, and Leu-Tyr-Leu-|-Tyr-Trp, in which cleavage of the -Tyr-|-Leu- and -Tyr-|-Trp bonds also occurs).. Its function is as follows. Cleaves peptides in various proteins in a process that requires ATP hydrolysis. Has a chymotrypsin-like activity. Plays a major role in the degradation of misfolded proteins. The chain is ATP-dependent Clp protease proteolytic subunit from Streptococcus equi subsp. zooepidemicus (strain H70).